Here is a 244-residue protein sequence, read N- to C-terminus: Inner kinetochore subunit fta7 (244 aa).

Belongs to the CENP-Q/OKP1 family. In terms of assembly, component of the heterotetrameric kinetochore subcomplex COMA, which consists of fta2, fta7, mal2 and mis17. The COMA subcomplex is part of a larger constitutive centromere-associated network (CCAN) (also known as central kinetochore Sim4 complex in fission yeast), which is composed of at least cnl2, cnp3, cnp20, fta1, fta2, fta3, fta4, fta6, fta7, mal2, mhf1, mhf2, mis6, mis15, mis17, sim4 and wip1.

It localises to the nucleus. Its subcellular location is the chromosome. The protein resides in the centromere. It is found in the kinetochore. The protein localises to the cytoplasm. It localises to the cytoskeleton. Its subcellular location is the microtubule organizing center. The protein resides in the spindle pole body. Component of the kinetochore, a multiprotein complex that assembles on centromeric DNA and attaches chromosomes to spindle microtubules, mediating chromosome segregation and sister chromatid segregation during meiosis and mitosis. Component of the inner kinetochore COMA complex, which connects centromere-associated proteins and the outer kinetochore. COMA interacts with other inner kinetochore proteins to form the inner kinetochore constitutive centromere-associated network (CCAN), which serves as a structural platform for outer kinetochore assembly. The polypeptide is Inner kinetochore subunit fta7 (fta7) (Schizosaccharomyces pombe (strain 972 / ATCC 24843) (Fission yeast)).